Consider the following 391-residue polypeptide: Mannonate dehydratase (391 aa).

Residues 334–359 (ERRRERDGGPRLPLRPDHGHHLLDDL) are disordered.

The protein belongs to the mannonate dehydratase family. Fe(2+) is required as a cofactor. The cofactor is Mn(2+).

The enzyme catalyses D-mannonate = 2-dehydro-3-deoxy-D-gluconate + H2O. Its pathway is carbohydrate metabolism; pentose and glucuronate interconversion. In terms of biological role, catalyzes the dehydration of D-mannonate. The sequence is that of Mannonate dehydratase from Chromohalobacter salexigens (strain ATCC BAA-138 / DSM 3043 / CIP 106854 / NCIMB 13768 / 1H11).